Here is a 1561-residue protein sequence, read N- to C-terminus: Synemin (1561 aa).

The segment at 1 to 10 (MLSWRLQTGS) is head. The segment at 11-49 (EKAELQELNARLYDYVCRVRELERENLLLEEELRSRLSR) is coil 1A. Positions 11–320 (EKAELQELNA…YRALLEGESN (310 aa)) are interaction with DMD and UTRN. Residues 11 to 322 (EKAELQELNA…ALLEGESNPE (312 aa)) form the IF rod domain. Residues 50–58 (EDRWAEDQA) form a linker 1 region. Residues 59 to 163 (LYAEEARSLR…DLRARAASLT (105 aa)) form a coil 1B region. A linker 12 region spans residues 164-186 (MHFRARATSPAAPPPRLRDVHDS). The tract at residues 187–300 (YALLVAESWR…LRDYQELLQV (114 aa)) is coil 2. A tail region spans residues 301 to 1561 (KTGLSLEVAT…EEEEEGEGWF (1261 aa)). Polar residues-rich tracts occupy residues 371–390 (SSAS…TTAV) and 401–421 (SRHS…KTIS). 3 disordered regions span residues 371–421 (SSAS…KTIS), 549–574 (DARK…RSVK), and 591–637 (EVST…DSTT). Residues 601–624 (GRKDVSHSGGREAETKETRFRLDT) show a composition bias toward basic and acidic residues. A compositionally biased stretch (polar residues) spans 625–637 (QDTASSLQSDSTT). Thr653 is modified (phosphothreonine). Phosphoserine occurs at positions 655, 778, 780, 1044, 1049, 1077, 1087, 1179, and 1182. Disordered regions lie at residues 1033–1061 (SVVR…VPAG) and 1075–1099 (SPSG…QGPV). Residues 1086-1099 (VSPSSDQRVTQGPV) are compositionally biased toward polar residues. The tract at residues 1152 to 1453 (VSGDFSEAVS…GPKETSFTFQ (302 aa)) is interaction with TLN1 and VCL. The segment at 1212–1231 (ADISGSGRMPGSERSHTEKE) is disordered. A compositionally biased stretch (basic and acidic residues) spans 1222-1231 (GSERSHTEKE). The tract at residues 1242–1557 (AQVGGNFATE…DNEEEEEEEG (316 aa)) is interaction with DMD and UTRN. Residue Ser1425 is modified to Phosphoserine. Residue Arg1481 is modified to Omega-N-methylarginine. Residues 1491–1519 (DERVASTGSGASPGDAHQAPGEKGTEQAG) form a disordered region.

This sequence belongs to the intermediate filament family. Interacts with DES, DMD, DTNA, TLN1, UTRN and VCL. Isoform 1 and isoform 2 interact with GFAP and VIM. Isoform 2 and isoform 3 are detected in adult skeletal muscle, heart and bladder, whereas isoform 1 is only detected in adult bladder (at protein level).

It localises to the cytoplasm. The protein localises to the cytoskeleton. Its subcellular location is the cell junction. It is found in the adherens junction. Type-VI intermediate filament (IF) which plays an important cytoskeletal role within the muscle cell cytoskeleton. It forms heteromeric IFs with desmin and/or vimentin, and via its interaction with cytoskeletal proteins alpha-dystrobrevin, dystrophin, talin-1, utrophin and vinculin, is able to link these heteromeric IFs to adherens-type junctions, such as to the costameres, neuromuscular junctions, and myotendinous junctions within striated muscle cells. The polypeptide is Synemin (Mus musculus (Mouse)).